Consider the following 291-residue polypeptide: Basic helix-loop-helix protein 80 (291 aa).

Residues 65–120 are disordered; the sequence is SAVLDTSPSVDRKRKAAEDSAHSKDSCKDGKSRRGKKASKEVEEKSTTEDEPPKGY. Residues 80–117 are compositionally biased toward basic and acidic residues; that stretch reads AAEDSAHSKDSCKDGKSRRGKKASKEVEEKSTTEDEPP. The short motif at 125–132 is the Nuclear localization signal element; that stretch reads ARRGQATD. The interval 129–142 is basic motif; degenerate; sequence QATDSHSLAERVRR. Residues 129-179 enclose the bHLH domain; that stretch reads QATDSHSLAERVRRERISERMRMLQALVPGCDKVTGKALILDEIINYVQSL. The helix-loop-helix motif stretch occupies residues 143–179; it reads ERISERMRMLQALVPGCDKVTGKALILDEIINYVQSL.

Belongs to the bHLH protein family. As to quaternary structure, homodimer. Interacts with IBH1, BC1 and LO9-177.

It is found in the nucleus. Its function is as follows. Together with BCL2, positive regulator of cell elongation at least partially through increased gibberellic acid (GA) biosynthesis. In Oryza sativa subsp. indica (Rice), this protein is Basic helix-loop-helix protein 80.